We begin with the raw amino-acid sequence, 201 residues long: Recombination protein RecR (201 aa).

A C4-type zinc finger spans residues 57-72 (CADCRTFTEQEVCNIC). Residues 81–176 (GQICVVESPA…EASRIAHGVP (96 aa)) form the Toprim domain.

The protein belongs to the RecR family.

Its function is as follows. May play a role in DNA repair. It seems to be involved in an RecBC-independent recombinational process of DNA repair. It may act with RecF and RecO. This chain is Recombination protein RecR, found in Escherichia coli O6:K15:H31 (strain 536 / UPEC).